The chain runs to 105 residues: Large ribosomal subunit protein bL21 (105 aa).

Belongs to the bacterial ribosomal protein bL21 family. In terms of assembly, part of the 50S ribosomal subunit. Contacts protein L20.

Functionally, this protein binds to 23S rRNA in the presence of protein L20. The polypeptide is Large ribosomal subunit protein bL21 (Frankia casuarinae (strain DSM 45818 / CECT 9043 / HFP020203 / CcI3)).